Consider the following 481-residue polypeptide: Aspartyl/glutamyl-tRNA(Asn/Gln) amidotransferase subunit B (481 aa).

This sequence belongs to the GatB/GatE family. GatB subfamily. Heterotrimer of A, B and C subunits.

The enzyme catalyses L-glutamyl-tRNA(Gln) + L-glutamine + ATP + H2O = L-glutaminyl-tRNA(Gln) + L-glutamate + ADP + phosphate + H(+). It carries out the reaction L-aspartyl-tRNA(Asn) + L-glutamine + ATP + H2O = L-asparaginyl-tRNA(Asn) + L-glutamate + ADP + phosphate + 2 H(+). Its function is as follows. Allows the formation of correctly charged Asn-tRNA(Asn) or Gln-tRNA(Gln) through the transamidation of misacylated Asp-tRNA(Asn) or Glu-tRNA(Gln) in organisms which lack either or both of asparaginyl-tRNA or glutaminyl-tRNA synthetases. The reaction takes place in the presence of glutamine and ATP through an activated phospho-Asp-tRNA(Asn) or phospho-Glu-tRNA(Gln). In Ehrlichia ruminantium (strain Gardel), this protein is Aspartyl/glutamyl-tRNA(Asn/Gln) amidotransferase subunit B.